Here is a 260-residue protein sequence, read N- to C-terminus: Ribosomal RNA small subunit methyltransferase A (260 aa).

Residues leucine 23, glycine 48, glutamate 69, aspartate 94, and asparagine 110 each contribute to the S-adenosyl-L-methionine site.

It belongs to the class I-like SAM-binding methyltransferase superfamily. rRNA adenine N(6)-methyltransferase family. RsmA subfamily.

It is found in the cytoplasm. The enzyme catalyses adenosine(1518)/adenosine(1519) in 16S rRNA + 4 S-adenosyl-L-methionine = N(6)-dimethyladenosine(1518)/N(6)-dimethyladenosine(1519) in 16S rRNA + 4 S-adenosyl-L-homocysteine + 4 H(+). Its function is as follows. Specifically dimethylates two adjacent adenosines (A1518 and A1519) in the loop of a conserved hairpin near the 3'-end of 16S rRNA in the 30S particle. May play a critical role in biogenesis of 30S subunits. This chain is Ribosomal RNA small subunit methyltransferase A, found in Thermotoga neapolitana (strain ATCC 49049 / DSM 4359 / NBRC 107923 / NS-E).